A 561-amino-acid chain; its full sequence is Arginine--tRNA ligase (561 aa).

A 'HIGH' region motif is present at residues Pro119–His129.

Belongs to the class-I aminoacyl-tRNA synthetase family. As to quaternary structure, monomer.

Its subcellular location is the cytoplasm. It catalyses the reaction tRNA(Arg) + L-arginine + ATP = L-arginyl-tRNA(Arg) + AMP + diphosphate. In Lactobacillus acidophilus (strain ATCC 700396 / NCK56 / N2 / NCFM), this protein is Arginine--tRNA ligase.